The sequence spans 397 residues: MNCSIGNWKHTVLYLTLIVSLLYFIESLISHKLHINYNKIRLKRSPNLPLRFRDDGTFKILQVADMHFGMGMITRCRDVLDSEFEYCSDLNTTRFLRRMIESERPDLIAFTGDNIFGSSTTDAAESLLEAIGPAIEYGIPWAAVLGNHDHESTLNRLELMTFLSLMDFSVSQINPLVEDETKGDTMRLIDGFGNYRVRVYGAPGSVLANSTVFDLFFFDSGDREIVQGKRTYGWIKESQLRWLQDTSIQGHSQRIHVNPPALAFFHIPILEVRELWYTPFIGQFQEGVACSIVQSGVLQTFVSMGNVKAAFMGHDHVNDFCGTLKGVWFCYGGGFGYHAYGRPNWHRRARVIEAKLGKGRDTWEGIKLIKTWKRLDDEYLSKIDEQVLWETSDSFLK.

A signal peptide spans 1–30; the sequence is MNCSIGNWKHTVLYLTLIVSLLYFIESLIS. Residues N91 and N209 are each glycosylated (N-linked (GlcNAc...) asparagine). H266 and H314 together coordinate Zn(2+). 314-316 provides a ligand contact to substrate; the sequence is HDH. H316 contributes to the Fe cation binding site.

The protein belongs to the metallophosphoesterase superfamily. Purple acid phosphatase family. Homodimer. It depends on Fe cation as a cofactor. The cofactor is Zn(2+). Expressed in roots, stems, leaves, flowers and siliques.

It localises to the secreted. The chain is Probable inactive purple acid phosphatase 28 (PAP28) from Arabidopsis thaliana (Mouse-ear cress).